The chain runs to 209 residues: Thiamine-phosphate synthase (209 aa).

Residues 40 to 44 (QLREK) and Asn-72 each bind 4-amino-2-methyl-5-(diphosphooxymethyl)pyrimidine. Residues Asp-73 and Asp-92 each coordinate Mg(2+). A 4-amino-2-methyl-5-(diphosphooxymethyl)pyrimidine-binding site is contributed by Ser-111. 137–139 (TNS) provides a ligand contact to 2-[(2R,5Z)-2-carboxy-4-methylthiazol-5(2H)-ylidene]ethyl phosphate. Lys-140 provides a ligand contact to 4-amino-2-methyl-5-(diphosphooxymethyl)pyrimidine. 2-[(2R,5Z)-2-carboxy-4-methylthiazol-5(2H)-ylidene]ethyl phosphate-binding positions include Gly-167 and 187 to 188 (IS).

This sequence belongs to the thiamine-phosphate synthase family. It depends on Mg(2+) as a cofactor.

It carries out the reaction 2-[(2R,5Z)-2-carboxy-4-methylthiazol-5(2H)-ylidene]ethyl phosphate + 4-amino-2-methyl-5-(diphosphooxymethyl)pyrimidine + 2 H(+) = thiamine phosphate + CO2 + diphosphate. The catalysed reaction is 2-(2-carboxy-4-methylthiazol-5-yl)ethyl phosphate + 4-amino-2-methyl-5-(diphosphooxymethyl)pyrimidine + 2 H(+) = thiamine phosphate + CO2 + diphosphate. It catalyses the reaction 4-methyl-5-(2-phosphooxyethyl)-thiazole + 4-amino-2-methyl-5-(diphosphooxymethyl)pyrimidine + H(+) = thiamine phosphate + diphosphate. It functions in the pathway cofactor biosynthesis; thiamine diphosphate biosynthesis; thiamine phosphate from 4-amino-2-methyl-5-diphosphomethylpyrimidine and 4-methyl-5-(2-phosphoethyl)-thiazole: step 1/1. Condenses 4-methyl-5-(beta-hydroxyethyl)thiazole monophosphate (THZ-P) and 2-methyl-4-amino-5-hydroxymethyl pyrimidine pyrophosphate (HMP-PP) to form thiamine monophosphate (TMP). In Clostridium tetani (strain Massachusetts / E88), this protein is Thiamine-phosphate synthase.